Here is a 469-residue protein sequence, read N- to C-terminus: Solute carrier family 52, riboflavin transporter, member 3 (469 aa).

Residues 1–2 lie on the Cytoplasmic side of the membrane; sequence MA. Residues 3–23 traverse the membrane as a helical segment; sequence FLMHLLVCVFGMGSWVTINGL. At 24–43 the chain is on the extracellular side; that stretch reads WVELPLLVMELPEGWYLPSY. Residues 44–64 traverse the membrane as a helical segment; the sequence is LTVVIQLANIGPLLVTLLHHF. At 65 to 71 the chain is on the cytoplasmic side; the sequence is RPSCLSE. Residues 72-92 traverse the membrane as a helical segment; it reads VPIIFTLLGVGTVTCIIFAFL. At 93-97 the chain is on the extracellular side; sequence WNMTS. N-linked (GlcNAc...) asparagine glycosylation is present at N94. Residues 98–118 traverse the membrane as a helical segment; sequence WVLDGHHSIAFLVLTFFLALV. Residues 119-137 are Cytoplasmic-facing; that stretch reads DCTSSVTFLPFMSRLPTYY. Residues 138 to 158 form a helical membrane-spanning segment; it reads LTTFFVGEGLSGLLPALVALA. At 159 to 220 the chain is on the extracellular side; the sequence is QGSGLTTCVN…SRYLPAHFSP (62 aa). The N-linked (GlcNAc...) asparagine glycan is linked to N168. A helical membrane pass occupies residues 221–241; the sequence is LVFFLLLSIMMACCLVAFFVL. At 242–292 the chain is on the cytoplasmic side; the sequence is QRQPRCWEASVEDLLNDQVTLHSIRPREENDLGPAGTVDSSQGQGYLEEKA. S251 is subject to Phosphoserine. Residues 293–313 traverse the membrane as a helical segment; that stretch reads APCCPAHLAFIYTLVAFVNAL. Residues 314–335 lie on the Extracellular side of the membrane; that stretch reads TNGMLPSVQTYSCLSYGPVAYH. The helical transmembrane segment at 336–356 threads the bilayer; it reads LAATLSIVANPLASLVSMFLP. Residues 357–359 lie on the Cytoplasmic side of the membrane; it reads NRS. A helical transmembrane segment spans residues 360-380; the sequence is LLFLGVLSVLGTCFGGYNMAM. The Extracellular portion of the chain corresponds to 381 to 396; sequence AVMSPCPLLQGHWGGE. The cysteines at positions 386 and 463 are disulfide-linked. Residues 397 to 417 traverse the membrane as a helical segment; sequence VLIVASWVLFSGCLSYVKVML. Residues 418-427 lie on the Cytoplasmic side of the membrane; sequence GVVLRDLSRS. Residues 428-448 traverse the membrane as a helical segment; that stretch reads ALLWCGAAVQLGSLLGALLMF. Residues 449–469 are Extracellular-facing; sequence PLVNVLRLFSSADFCNLHCPA.

It belongs to the riboflavin transporter family. Predominantly expressed in testis. Highly expressed in small intestine and prostate.

The protein localises to the apical cell membrane. The protein resides in the cell membrane. It localises to the nucleus membrane. It is found in the cytoplasm. It catalyses the reaction riboflavin(in) = riboflavin(out). Activity is strongly inhibited by riboflavin analogs, such as lumiflavin, flavin mononucleotide (FMN), flavin adenine dinucleotide (FAD), by methylene blue, and to a lesser extent by amiloride. Riboflavin transport is Na(+)-independent at low pH but significantly reduced by Na(+) depletion under neutral pH conditions. Plasma membrane transporter mediating the uptake by cells of the water soluble vitamin B2/riboflavin that plays a key role in biochemical oxidation-reduction reactions of the carbohydrate, lipid, and amino acid metabolism. Humans are unable to synthesize vitamin B2/riboflavin and must obtain it via intestinal absorption. The sequence is that of Solute carrier family 52, riboflavin transporter, member 3 (SLC52A3) from Homo sapiens (Human).